The sequence spans 132 residues: Large ribosomal subunit protein bL17 (132 aa).

The protein belongs to the bacterial ribosomal protein bL17 family. In terms of assembly, part of the 50S ribosomal subunit. Contacts protein L32.

The sequence is that of Large ribosomal subunit protein bL17 from Ruthia magnifica subsp. Calyptogena magnifica.